The primary structure comprises 392 residues: Anhydro-N-acetylmuramic acid kinase (392 aa).

An ATP-binding site is contributed by 22–29 (GTSMDGVD).

The protein belongs to the anhydro-N-acetylmuramic acid kinase family.

It carries out the reaction 1,6-anhydro-N-acetyl-beta-muramate + ATP + H2O = N-acetyl-D-muramate 6-phosphate + ADP + H(+). It participates in amino-sugar metabolism; 1,6-anhydro-N-acetylmuramate degradation. It functions in the pathway cell wall biogenesis; peptidoglycan recycling. In terms of biological role, catalyzes the specific phosphorylation of 1,6-anhydro-N-acetylmuramic acid (anhMurNAc) with the simultaneous cleavage of the 1,6-anhydro ring, generating MurNAc-6-P. Is required for the utilization of anhMurNAc either imported from the medium or derived from its own cell wall murein, and thus plays a role in cell wall recycling. The polypeptide is Anhydro-N-acetylmuramic acid kinase (Burkholderia pseudomallei (strain 1106a)).